The chain runs to 374 residues: Tetraacyldisaccharide 4'-kinase (374 aa).

Position 59-66 (59-66 (TAGGTGKT)) interacts with ATP.

Belongs to the LpxK family.

It catalyses the reaction a lipid A disaccharide + ATP = a lipid IVA + ADP + H(+). It functions in the pathway glycolipid biosynthesis; lipid IV(A) biosynthesis; lipid IV(A) from (3R)-3-hydroxytetradecanoyl-[acyl-carrier-protein] and UDP-N-acetyl-alpha-D-glucosamine: step 6/6. Functionally, transfers the gamma-phosphate of ATP to the 4'-position of a tetraacyldisaccharide 1-phosphate intermediate (termed DS-1-P) to form tetraacyldisaccharide 1,4'-bis-phosphate (lipid IVA). The sequence is that of Tetraacyldisaccharide 4'-kinase from Elusimicrobium minutum (strain Pei191).